A 296-amino-acid chain; its full sequence is Acetylglutamate kinase (296 aa).

Substrate-binding positions include 68 to 69 (GG), arginine 90, and asparagine 195.

Belongs to the acetylglutamate kinase family. ArgB subfamily.

The protein localises to the cytoplasm. It carries out the reaction N-acetyl-L-glutamate + ATP = N-acetyl-L-glutamyl 5-phosphate + ADP. It functions in the pathway amino-acid biosynthesis; L-arginine biosynthesis; N(2)-acetyl-L-ornithine from L-glutamate: step 2/4. Functionally, catalyzes the ATP-dependent phosphorylation of N-acetyl-L-glutamate. This chain is Acetylglutamate kinase, found in Desulfotalea psychrophila (strain LSv54 / DSM 12343).